The chain runs to 425 residues: Histidine--tRNA ligase (425 aa).

This sequence belongs to the class-II aminoacyl-tRNA synthetase family. Homodimer.

The protein localises to the cytoplasm. It carries out the reaction tRNA(His) + L-histidine + ATP = L-histidyl-tRNA(His) + AMP + diphosphate + H(+). In Erwinia tasmaniensis (strain DSM 17950 / CFBP 7177 / CIP 109463 / NCPPB 4357 / Et1/99), this protein is Histidine--tRNA ligase.